Consider the following 258-residue polypeptide: Large ribosomal subunit protein uL15c (258 aa).

Residues 1–65 (MSAASLIPVS…NVKSSGENVR (65 aa)) constitute a chloroplast transit peptide. The disordered stretch occupies residues 67–90 (RLDNLGPQPGSRKRPKRKGRGIAA). Positions 77 to 86 (SRKRPKRKGR) are enriched in basic residues.

This sequence belongs to the universal ribosomal protein uL15 family. Part of the 50S ribosomal subunit.

The protein localises to the plastid. It localises to the chloroplast. In Pisum sativum (Garden pea), this protein is Large ribosomal subunit protein uL15c (RPL15).